The primary structure comprises 99 residues: UPF0213 protein SP_1535 (99 aa).

Residues 3-78 form the GIY-YIG domain; it reads HKAYMYVLEC…KRKKRPQKEE (76 aa).

The protein belongs to the UPF0213 family.

The protein is UPF0213 protein SP_1535 of Streptococcus pneumoniae serotype 4 (strain ATCC BAA-334 / TIGR4).